A 227-amino-acid chain; its full sequence is Cytochrome c oxidase subunit 2 (227 aa).

Residues methionine 1–serine 14 lie on the Mitochondrial intermembrane side of the membrane. A helical membrane pass occupies residues proline 15–methionine 45. Over leucine 46 to glutamine 59 the chain is Mitochondrial matrix. A helical membrane pass occupies residues glutamate 60–methionine 87. The Mitochondrial intermembrane segment spans residues aspartate 88 to leucine 227. Positions 161, 196, 198, 200, 204, and 207 each coordinate Cu cation. Glutamate 198 provides a ligand contact to Mg(2+).

It belongs to the cytochrome c oxidase subunit 2 family. As to quaternary structure, component of the cytochrome c oxidase (complex IV, CIV), a multisubunit enzyme composed of 14 subunits. The complex is composed of a catalytic core of 3 subunits MT-CO1, MT-CO2 and MT-CO3, encoded in the mitochondrial DNA, and 11 supernumerary subunits COX4I, COX5A, COX5B, COX6A, COX6B, COX6C, COX7A, COX7B, COX7C, COX8 and NDUFA4, which are encoded in the nuclear genome. The complex exists as a monomer or a dimer and forms supercomplexes (SCs) in the inner mitochondrial membrane with NADH-ubiquinone oxidoreductase (complex I, CI) and ubiquinol-cytochrome c oxidoreductase (cytochrome b-c1 complex, complex III, CIII), resulting in different assemblies (supercomplex SCI(1)III(2)IV(1) and megacomplex MCI(2)III(2)IV(2)). Found in a complex with TMEM177, COA6, COX18, COX20, SCO1 and SCO2. Interacts with TMEM177 in a COX20-dependent manner. Interacts with COX20. Interacts with COX16. It depends on Cu cation as a cofactor.

It is found in the mitochondrion inner membrane. The enzyme catalyses 4 Fe(II)-[cytochrome c] + O2 + 8 H(+)(in) = 4 Fe(III)-[cytochrome c] + 2 H2O + 4 H(+)(out). Its function is as follows. Component of the cytochrome c oxidase, the last enzyme in the mitochondrial electron transport chain which drives oxidative phosphorylation. The respiratory chain contains 3 multisubunit complexes succinate dehydrogenase (complex II, CII), ubiquinol-cytochrome c oxidoreductase (cytochrome b-c1 complex, complex III, CIII) and cytochrome c oxidase (complex IV, CIV), that cooperate to transfer electrons derived from NADH and succinate to molecular oxygen, creating an electrochemical gradient over the inner membrane that drives transmembrane transport and the ATP synthase. Cytochrome c oxidase is the component of the respiratory chain that catalyzes the reduction of oxygen to water. Electrons originating from reduced cytochrome c in the intermembrane space (IMS) are transferred via the dinuclear copper A center (CU(A)) of subunit 2 and heme A of subunit 1 to the active site in subunit 1, a binuclear center (BNC) formed by heme A3 and copper B (CU(B)). The BNC reduces molecular oxygen to 2 water molecules using 4 electrons from cytochrome c in the IMS and 4 protons from the mitochondrial matrix. In Tamias townsendii (Townsend's chipmunk), this protein is Cytochrome c oxidase subunit 2 (MT-CO2).